The sequence spans 512 residues: NADH-quinone oxidoreductase subunit N 2 (512 aa).

The next 14 membrane-spanning stretches (helical) occupy residues 23 to 43, 50 to 70, 88 to 108, 120 to 140, 144 to 164, 179 to 199, 220 to 240, 254 to 274, 295 to 315, 323 to 343, 351 to 371, 394 to 414, 429 to 449, and 477 to 497; these read AFVPEIFLSGLFLLVVTIDLF, TIIPAVSVIGLIISGYFVYLQ, FAIFFKYLFIVSGVFAVLISI, SLGEYYSLIVAMVLGMFLMAS, LLMMFLSLEMVSIISYILVGY, VIYGSVSSGLMIYGFSIIYGL, ITLMLGSLLILGGFGYKAGVV, PTPITAYLSVGSKAAGFAMLI, WVTLLSVVSVVSMVLGNVVAL, LLAYSSIAHAGYILLGVIVAD, LFYLAAYTIMNIGAFFVIILI, AASLTIFLVSLTGLPPTVGFI, VFVWLAVIGVLTSVVSLYFYF, and LVAFLMILTVVFGLYFTPLSV.

Belongs to the complex I subunit 2 family. As to quaternary structure, NDH-1 is composed of 14 different subunits. Subunits NuoA, H, J, K, L, M, N constitute the membrane sector of the complex.

The protein resides in the cell inner membrane. The catalysed reaction is a quinone + NADH + 5 H(+)(in) = a quinol + NAD(+) + 4 H(+)(out). Functionally, NDH-1 shuttles electrons from NADH, via FMN and iron-sulfur (Fe-S) centers, to quinones in the respiratory chain. The immediate electron acceptor for the enzyme in this species is believed to be a menaquinone. Couples the redox reaction to proton translocation (for every two electrons transferred, four hydrogen ions are translocated across the cytoplasmic membrane), and thus conserves the redox energy in a proton gradient. The protein is NADH-quinone oxidoreductase subunit N 2 of Chloroherpeton thalassium (strain ATCC 35110 / GB-78).